Reading from the N-terminus, the 261-residue chain is Global transcriptional regulator CodY (261 aa).

The GAF domain stretch occupies residues 1–159 (MANLLDKTRK…ASTVVGLQLL (159 aa)). A DNA-binding region (H-T-H motif) is located at residues 207 to 226 (ASVIADRIGITRSVIVNALR).

This sequence belongs to the CodY family.

It is found in the cytoplasm. In terms of biological role, DNA-binding global transcriptional regulator which is involved in the adaptive response to starvation and acts by directly or indirectly controlling the expression of numerous genes in response to nutrient availability. During rapid exponential growth, CodY is highly active and represses genes whose products allow adaptation to nutrient depletion. The polypeptide is Global transcriptional regulator CodY (Streptococcus thermophilus (strain CNRZ 1066)).